The primary structure comprises 260 residues: HMP-PP phosphatase (260 aa).

The active-site Nucleophile is the D8. 3 residues coordinate Mg(2+): D8, D10, and D212.

This sequence belongs to the HAD-like hydrolase superfamily. Cof family. Requires Mg(2+) as cofactor.

It carries out the reaction 4-amino-2-methyl-5-(diphosphooxymethyl)pyrimidine + H2O = 4-amino-2-methyl-5-(phosphooxymethyl)pyrimidine + phosphate + H(+). Catalyzes the hydrolysis of 4-amino-2-methyl-5-hydroxymethylpyrimidine pyrophosphate (HMP-PP) to 4-amino-2-methyl-5-hydroxymethylpyrimidine phosphate (HMP-P). This chain is HMP-PP phosphatase, found in Shigella boydii serotype 4 (strain Sb227).